Consider the following 207-residue polypeptide: Acyl-homoserine-lactone synthase (207 aa).

It belongs to the autoinducer synthase family.

The catalysed reaction is a fatty acyl-[ACP] + S-adenosyl-L-methionine = an N-acyl-L-homoserine lactone + S-methyl-5'-thioadenosine + holo-[ACP] + H(+). In terms of biological role, required for the synthesis of N-butanoyl-L-homoserine lactone (BHL), an autoinducer molecule which binds to AhyR. The chain is Acyl-homoserine-lactone synthase (ahyI) from Aeromonas hydrophila.